The following is a 437-amino-acid chain: Na(+)/H(+) antiporter NhaA (437 aa).

11 helical membrane-spanning segments follow: residues 12 to 32, 65 to 85, 103 to 123, 133 to 153, 162 to 182, 186 to 206, 214 to 234, 308 to 328, 333 to 353, 377 to 397, and 412 to 432; these read SMNI…AVIA, LTMI…MVGL, ALPF…YSMV, GLAI…SLLG, IFLT…IAIF, HVAY…YFIG, IFFL…GIHS, GAVN…VMFS, VIGG…FLGI, ISGV…IANL, and LGVL…LHWV.

It belongs to the NhaA Na(+)/H(+) (TC 2.A.33) antiporter family.

Its subcellular location is the cell inner membrane. It carries out the reaction Na(+)(in) + 2 H(+)(out) = Na(+)(out) + 2 H(+)(in). Na(+)/H(+) antiporter that extrudes sodium in exchange for external protons. In Bacteroides fragilis (strain YCH46), this protein is Na(+)/H(+) antiporter NhaA.